Here is a 596-residue protein sequence, read N- to C-terminus: Elongation factor 4 (596 aa).

The 183-residue stretch at 2-184 (KHIRNFSIIA…VIVDQIPPPE (183 aa)) folds into the tr-type G domain. GTP is bound by residues 14-19 (DHGKST) and 131-134 (NKID).

The protein belongs to the TRAFAC class translation factor GTPase superfamily. Classic translation factor GTPase family. LepA subfamily.

It is found in the cell inner membrane. The catalysed reaction is GTP + H2O = GDP + phosphate + H(+). Required for accurate and efficient protein synthesis under certain stress conditions. May act as a fidelity factor of the translation reaction, by catalyzing a one-codon backward translocation of tRNAs on improperly translocated ribosomes. Back-translocation proceeds from a post-translocation (POST) complex to a pre-translocation (PRE) complex, thus giving elongation factor G a second chance to translocate the tRNAs correctly. Binds to ribosomes in a GTP-dependent manner. The sequence is that of Elongation factor 4 from Shewanella sp. (strain ANA-3).